Consider the following 89-residue polypeptide: Small ribosomal subunit protein uS15 (89 aa).

Belongs to the universal ribosomal protein uS15 family. As to quaternary structure, part of the 30S ribosomal subunit. Forms a bridge to the 50S subunit in the 70S ribosome, contacting the 23S rRNA.

In terms of biological role, one of the primary rRNA binding proteins, it binds directly to 16S rRNA where it helps nucleate assembly of the platform of the 30S subunit by binding and bridging several RNA helices of the 16S rRNA. Forms an intersubunit bridge (bridge B4) with the 23S rRNA of the 50S subunit in the ribosome. The polypeptide is Small ribosomal subunit protein uS15 (Renibacterium salmoninarum (strain ATCC 33209 / DSM 20767 / JCM 11484 / NBRC 15589 / NCIMB 2235)).